A 676-amino-acid chain; its full sequence is DNA ligase (676 aa).

NAD(+) is bound by residues 32–36 (DAEYD), 81–82 (SL), and Glu113. Catalysis depends on Lys115, which acts as the N6-AMP-lysine intermediate. The NAD(+) site is built by Arg136, Glu173, Lys291, and Lys315. Cys409, Cys412, Cys427, and Cys433 together coordinate Zn(2+). One can recognise a BRCT domain in the interval 595–676 (SEKTYFFNKK…LNSLIRIKEQ (82 aa)).

The protein belongs to the NAD-dependent DNA ligase family. LigA subfamily. Mg(2+) serves as cofactor. It depends on Mn(2+) as a cofactor.

It carries out the reaction NAD(+) + (deoxyribonucleotide)n-3'-hydroxyl + 5'-phospho-(deoxyribonucleotide)m = (deoxyribonucleotide)n+m + AMP + beta-nicotinamide D-nucleotide.. Functionally, DNA ligase that catalyzes the formation of phosphodiester linkages between 5'-phosphoryl and 3'-hydroxyl groups in double-stranded DNA using NAD as a coenzyme and as the energy source for the reaction. It is essential for DNA replication and repair of damaged DNA. The polypeptide is DNA ligase (Buchnera aphidicola subsp. Acyrthosiphon pisum (strain Tuc7)).